The sequence spans 658 residues: Exoribonuclease 2 (658 aa).

The RNB domain maps to 189-531 (REDLTALHFI…NHRLIKAVLT (343 aa)). The S1 motif domain maps to 576-658 (KPTFQAEIQD…ETRSIVGTLC (83 aa)).

It belongs to the RNR ribonuclease family. RNase II subfamily.

The protein resides in the cytoplasm. The catalysed reaction is Exonucleolytic cleavage in the 3'- to 5'-direction to yield nucleoside 5'-phosphates.. Its function is as follows. Involved in mRNA degradation. Hydrolyzes single-stranded polyribonucleotides processively in the 3' to 5' direction. This chain is Exoribonuclease 2, found in Pasteurella multocida (strain Pm70).